Reading from the N-terminus, the 192-residue chain is Phosphomevalonate kinase (192 aa).

ATP-binding positions include 17 to 23 (KRKSGKD) and Arg-141. Asn-170 serves as a coordination point for substrate. ATP is bound by residues His-171 and Gln-180.

As to quaternary structure, monomer.

The protein resides in the cytoplasm. It localises to the cytosol. It carries out the reaction (R)-5-phosphomevalonate + ATP = (R)-5-diphosphomevalonate + ADP. It functions in the pathway isoprenoid biosynthesis; isopentenyl diphosphate biosynthesis via mevalonate pathway; isopentenyl diphosphate from (R)-mevalonate: step 2/3. Its function is as follows. Catalyzes the reversible ATP-dependent phosphorylation of mevalonate 5-phosphate to produce mevalonate diphosphate and ADP, a key step in the mevalonic acid mediated biosynthesis of isopentenyl diphosphate and other polyisoprenoid metabolites. In Bos taurus (Bovine), this protein is Phosphomevalonate kinase (PMVK).